A 349-amino-acid chain; its full sequence is MYISNLRLQNFRNIHAKSFDFKNSINFIVGKNGSGKTSILESIYFLSHSRSFRSSQLNRIINHNADEFIIYTKAYNPDEITISLSRKKNSNNISKLNLEIQKNHTEITRNLPIQLINPESFNIINSGAQQRCKVLDWGAFYLDKTFLKIWQQTKFLVKQRNSALKQNYPYSYILSIDKKLCEFAEILDYKRQAYFTKLKPKIYEILSHFNPNLQLDIDYFRGWNLHKSLAQVLEESFNYDNKYKVTNHGPHKADIVLSVSHKPIQDIFSRGQQKLLICALKLAQGEIHNSENDNKCIYLIDDITSELDSIHTLTLFNYLKQLKSQVFITTTEKNKINEFIDTNSYILEI.

30-37 contacts ATP; it reads GKNGSGKT.

The protein belongs to the RecF family.

Its subcellular location is the cytoplasm. Its function is as follows. The RecF protein is involved in DNA metabolism; it is required for DNA replication and normal SOS inducibility. RecF binds preferentially to single-stranded, linear DNA. It also seems to bind ATP. This Francisella tularensis subsp. mediasiatica (strain FSC147) protein is DNA replication and repair protein RecF.